The chain runs to 127 residues: Large ribosomal subunit protein uL22 (127 aa).

It belongs to the universal ribosomal protein uL22 family. As to quaternary structure, part of the 50S ribosomal subunit.

Functionally, this protein binds specifically to 23S rRNA; its binding is stimulated by other ribosomal proteins, e.g. L4, L17, and L20. It is important during the early stages of 50S assembly. It makes multiple contacts with different domains of the 23S rRNA in the assembled 50S subunit and ribosome. In terms of biological role, the globular domain of the protein is located near the polypeptide exit tunnel on the outside of the subunit, while an extended beta-hairpin is found that lines the wall of the exit tunnel in the center of the 70S ribosome. This Methylobacterium sp. (strain 4-46) protein is Large ribosomal subunit protein uL22.